The sequence spans 245 residues: Epoxyqueuosine reductase QueH (245 aa).

4 residues coordinate [4Fe-4S] cluster: Cys52, Cys53, Cys131, and Cys134. Residues Cys214 and Cys216 are joined by a disulfide bond.

Belongs to the QueH family.

It carries out the reaction epoxyqueuosine(34) in tRNA + AH2 = queuosine(34) in tRNA + A + H2O. The protein operates within tRNA modification; tRNA-queuosine biosynthesis. Catalyzes the conversion of epoxyqueuosine (oQ) to queuosine (Q), which is a hypermodified base found in the wobble positions of tRNA(Asp), tRNA(Asn), tRNA(His) and tRNA(Tyr). The protein is Epoxyqueuosine reductase QueH of Haemophilus influenzae (strain ATCC 51907 / DSM 11121 / KW20 / Rd).